The primary structure comprises 709 residues: Leucine-rich repeat-containing protein 4B (709 aa).

An N-terminal signal peptide occupies residues 1-38 (MAQAHIRGSPCPLLPPGRMSWPHGALLLLWLFSPPLRA). Positions 50 to 88 (GGGSPPATSCPAACSCSNQASRVICTRRELAEVPASIPV) constitute an LRRNT domain. 9 LRR repeats span residues 89-110 (NTRY…TFKH), 113-134 (HLEI…AFNG), 137-158 (SLNT…AFEY), 161-182 (KLRE…AFNR), 185-207 (SLRR…AFEG), 210-231 (NLRY…TALV), 232-253 (RLEE…SFQG), 256-277 (SLRK…AFDD), and 280-301 (SLEE…LFTP). Residue N226 is glycosylated (N-linked (GlcNAc...) asparagine). 8 N-linked (GlcNAc...) asparagine glycosylation sites follow: N285, N335, N376, N402, N424, N427, N446, and N454. The 53-residue stretch at 313-365 (NPWHCNCDVLWLSWWLKETVPSNTTCCARCHAPAGLKGRYIGELDQSHFTCYA) folds into the LRRCT domain. Positions 366–454 (PVIVEPPTDL…GNTTASATLN (89 aa)) constitute an Ig-like C2-type domain. A disulfide bond links C387 and C438. Residues 496–552 (TQPGEEAQQPRGTEKEPPGPTTDGAWGGGRPDAAAPASASTTAPAPRSSRPTEKAFT) form a disordered region. A compositionally biased stretch (low complexity) spans 528-544 (AAAPASASTTAPAPRSS). The helical transmembrane segment at 575 to 595 (IIIGCFVAITFMAAVMLVAFY) threads the bilayer. Position 689 is a phosphoserine (S689).

Interacts with PTPRF. Interacts with DLG4. N-glycosylated. O-glycosylated; contains sialic acid.

The protein resides in the membrane. The protein localises to the presynaptic cell membrane. Its function is as follows. Synaptic adhesion protein. Regulates the formation of excitatory synapses. The trans-synaptic adhesion between LRRC4B and PTPRF regulates the formation of excitatory synapses in a bidirectional manner. The protein is Leucine-rich repeat-containing protein 4B (Lrrc4b) of Mus musculus (Mouse).